The following is a 141-amino-acid chain: Large ribosomal subunit protein uL11c (141 aa).

The protein belongs to the universal ribosomal protein uL11 family. In terms of assembly, part of the ribosomal stalk of the 50S ribosomal subunit. Interacts with L10 and the large rRNA to form the base of the stalk. L10 forms an elongated spine to which L12 dimers bind in a sequential fashion forming a multimeric L10(L12)X complex.

The protein localises to the plastid. It is found in the chloroplast. In terms of biological role, forms part of the ribosomal stalk which helps the ribosome interact with GTP-bound translation factors. This is Large ribosomal subunit protein uL11c from Trieres chinensis (Marine centric diatom).